We begin with the raw amino-acid sequence, 596 residues long: Chaperone protein DnaK (596 aa).

Position 174 is a phosphothreonine; by autocatalysis (Thr-174). A disordered region spans residues 576–596 (ANATKDQSSKDQEEVATVVEE).

It belongs to the heat shock protein 70 family.

Its function is as follows. Acts as a chaperone. This chain is Chaperone protein DnaK, found in Mycoplasmopsis synoviae (strain 53) (Mycoplasma synoviae).